A 478-amino-acid polypeptide reads, in one-letter code: Bifunctional protein HldE (478 aa).

Residues 1 to 318 (MKITLPDFTR…ENAIHARPES (318 aa)) are ribokinase. ATP is bound at residue 195–198 (NLSE). Asp264 is an active-site residue. Residues 344-478 (MTNGVFDILH…KTIISGSGKN (135 aa)) form a cytidylyltransferase region.

In the N-terminal section; belongs to the carbohydrate kinase PfkB family. The protein in the C-terminal section; belongs to the cytidylyltransferase family. Homodimer.

It carries out the reaction D-glycero-beta-D-manno-heptose 7-phosphate + ATP = D-glycero-beta-D-manno-heptose 1,7-bisphosphate + ADP + H(+). The enzyme catalyses D-glycero-beta-D-manno-heptose 1-phosphate + ATP + H(+) = ADP-D-glycero-beta-D-manno-heptose + diphosphate. It participates in nucleotide-sugar biosynthesis; ADP-L-glycero-beta-D-manno-heptose biosynthesis; ADP-L-glycero-beta-D-manno-heptose from D-glycero-beta-D-manno-heptose 7-phosphate: step 1/4. It functions in the pathway nucleotide-sugar biosynthesis; ADP-L-glycero-beta-D-manno-heptose biosynthesis; ADP-L-glycero-beta-D-manno-heptose from D-glycero-beta-D-manno-heptose 7-phosphate: step 3/4. Catalyzes the phosphorylation of D-glycero-D-manno-heptose 7-phosphate at the C-1 position to selectively form D-glycero-beta-D-manno-heptose-1,7-bisphosphate. In terms of biological role, catalyzes the ADP transfer from ATP to D-glycero-beta-D-manno-heptose 1-phosphate, yielding ADP-D-glycero-beta-D-manno-heptose. The polypeptide is Bifunctional protein HldE (Erwinia tasmaniensis (strain DSM 17950 / CFBP 7177 / CIP 109463 / NCPPB 4357 / Et1/99)).